Here is a 291-residue protein sequence, read N- to C-terminus: Urease accessory protein UreD (291 aa).

Belongs to the UreD family. In terms of assembly, ureD, UreF and UreG form a complex that acts as a GTP-hydrolysis-dependent molecular chaperone, activating the urease apoprotein by helping to assemble the nickel containing metallocenter of UreC. The UreE protein probably delivers the nickel.

It is found in the cytoplasm. Functionally, required for maturation of urease via the functional incorporation of the urease nickel metallocenter. The polypeptide is Urease accessory protein UreD (Acinetobacter baumannii (strain ATCC 17978 / DSM 105126 / CIP 53.77 / LMG 1025 / NCDC KC755 / 5377)).